Consider the following 181-residue polypeptide: Insulin-like growth factor 2 (181 aa).

A signal peptide spans 1–24; the sequence is MGIPVGKSLLMLFTFLAFASCCIA. Residues 25–52 are b; sequence AYRPSETLCGGELVDTLQFVCGDRGFYF. 3 cysteine pairs are disulfide-bonded: C33–C71, C45–C84, and C70–C75. The tract at residues 53–64 is c; the sequence is SRPASRINRRSR. The tract at residues 65–85 is a; sequence GIVEECCFRSCDLALLETYCA. The d stretch occupies residues 86–91; it reads TPAKSE. Residues 92–181 constitute a propeptide, e peptide; the sequence is RDVSTPPTVL…AFVEVSSDLQ (90 aa). T163 is a glycosylation site (O-linked (GalNAc...) threonine).

It belongs to the insulin family. Interacts with MYORG; this interaction is required for IGF2 secretion. Interacts with integrins ITGAV:ITGB3 and ITGA6:ITGB4; integrin-binding is required for IGF2 signaling. Interacts with IGFBP2. Post-translationally, proteolytically processed by PCSK4, proIGF2 is cleaved at Arg-128 and Arg-92 to generate big-IGF2 and mature IGF2.

It localises to the secreted. In terms of biological role, the insulin-like growth factors possess growth-promoting activity. Major fetal growth hormone in mammals. Plays a key role in regulating fetoplacental development. IGF2 is influenced by placental lactogen. Also involved in tissue differentiation. In adults, involved in glucose metabolism in adipose tissue, skeletal muscle and liver. Acts as a ligand for integrin which is required for IGF2 signaling. Positively regulates myogenic transcription factor MYOD1 function by facilitating the recruitment of transcriptional coactivators, thereby controlling muscle terminal differentiation. Inhibits myoblast differentiation and modulates metabolism via increasing the mitochondrial respiration rate. Its function is as follows. Preptin undergoes glucose-mediated co-secretion with insulin, and acts as a physiological amplifier of glucose-mediated insulin secretion. Exhibits osteogenic properties by increasing osteoblast mitogenic activity through phosphoactivation of MAPK1 and MAPK3. This Equus caballus (Horse) protein is Insulin-like growth factor 2.